Here is a 108-residue protein sequence, read N- to C-terminus: Urease subunit beta (108 aa).

Belongs to the urease beta subunit family. Heterotrimer of UreA (gamma), UreB (beta) and UreC (alpha) subunits. Three heterotrimers associate to form the active enzyme.

It is found in the cytoplasm. It carries out the reaction urea + 2 H2O + H(+) = hydrogencarbonate + 2 NH4(+). The protein operates within nitrogen metabolism; urea degradation; CO(2) and NH(3) from urea (urease route): step 1/1. The chain is Urease subunit beta from Chromohalobacter salexigens (strain ATCC BAA-138 / DSM 3043 / CIP 106854 / NCIMB 13768 / 1H11).